Reading from the N-terminus, the 386-residue chain is Succinate--CoA ligase [ADP-forming] subunit beta (386 aa).

The 236-residue stretch at 9–244 (KELLKQFGVT…LDEEDPAEIE (236 aa)) folds into the ATP-grasp domain. Residues Lys-46, 53 to 55 (GRG), Glu-99, Ala-102, and Glu-107 each bind ATP. Mg(2+) contacts are provided by Asn-199 and Asp-213. Substrate-binding positions include Asn-264 and 321–323 (GIM).

Belongs to the succinate/malate CoA ligase beta subunit family. Heterotetramer of two alpha and two beta subunits. The cofactor is Mg(2+).

It catalyses the reaction succinate + ATP + CoA = succinyl-CoA + ADP + phosphate. The enzyme catalyses GTP + succinate + CoA = succinyl-CoA + GDP + phosphate. It functions in the pathway carbohydrate metabolism; tricarboxylic acid cycle; succinate from succinyl-CoA (ligase route): step 1/1. Functionally, succinyl-CoA synthetase functions in the citric acid cycle (TCA), coupling the hydrolysis of succinyl-CoA to the synthesis of either ATP or GTP and thus represents the only step of substrate-level phosphorylation in the TCA. The beta subunit provides nucleotide specificity of the enzyme and binds the substrate succinate, while the binding sites for coenzyme A and phosphate are found in the alpha subunit. This chain is Succinate--CoA ligase [ADP-forming] subunit beta, found in Bordetella pertussis (strain Tohama I / ATCC BAA-589 / NCTC 13251).